Consider the following 293-residue polypeptide: Bifunctional protein FolD (293 aa).

NADP(+)-binding positions include 165-167 (GRS), Thr194, and Val235.

Belongs to the tetrahydrofolate dehydrogenase/cyclohydrolase family. Homodimer.

It catalyses the reaction (6R)-5,10-methylene-5,6,7,8-tetrahydrofolate + NADP(+) = (6R)-5,10-methenyltetrahydrofolate + NADPH. The catalysed reaction is (6R)-5,10-methenyltetrahydrofolate + H2O = (6R)-10-formyltetrahydrofolate + H(+). It functions in the pathway one-carbon metabolism; tetrahydrofolate interconversion. Its function is as follows. Catalyzes the oxidation of 5,10-methylenetetrahydrofolate to 5,10-methenyltetrahydrofolate and then the hydrolysis of 5,10-methenyltetrahydrofolate to 10-formyltetrahydrofolate. The sequence is that of Bifunctional protein FolD from Syntrophus aciditrophicus (strain SB).